Consider the following 570-residue polypeptide: Hydroxylamine reductase (570 aa).

Positions 5, 8, 17, and 23 each coordinate [4Fe-4S] cluster. His266, Glu290, Cys334, Cys425, Cys453, Cys478, Glu513, and Lys515 together coordinate hybrid [4Fe-2O-2S] cluster. A Cysteine persulfide modification is found at Cys425.

It belongs to the HCP family. [4Fe-4S] cluster is required as a cofactor. The cofactor is hybrid [4Fe-2O-2S] cluster.

The protein localises to the cytoplasm. The enzyme catalyses A + NH4(+) + H2O = hydroxylamine + AH2 + H(+). Catalyzes the reduction of hydroxylamine to form NH(3) and H(2)O. The polypeptide is Hydroxylamine reductase (Clostridium tetani (strain Massachusetts / E88)).